The sequence spans 211 residues: Claudin-7 (211 aa).

Topologically, residues 1–7 (MANSGLQ) are cytoplasmic. The chain crosses the membrane as a helical span at residues 8–28 (LLGFSMAMLGWVGLIASTAIP). The Extracellular portion of the chain corresponds to 29-81 (QWQMSSYAGDNIITAQAMYKGLWMECVTQSTGMMSCKMYDSVLALPAATQATR). The helical transmembrane segment at 82 to 102 (ALMIVSLVLGFLAMFVATMGM) threads the bilayer. Over 103 to 119 (KCTRCGGDDKVKKARIA) the chain is Cytoplasmic. Residues 120–140 (MTGGIIFIVAGLAALVACSWI) traverse the membrane as a helical segment. Over 141–160 (GHQIVTDFYNPLTPMNIKYE) the chain is Extracellular. Residues 161-181 (FGPAIFIGWAGSALVLLGGAL) form a helical membrane-spanning segment. At 182–211 (LSCSCPGSESKAAYRAPRSYPKSNSSKEYV) the chain is on the cytoplasmic side. Positions 210-211 (YV) are interactions with TJP1, TJP2 and TJP3.

This sequence belongs to the claudin family. As to quaternary structure, directly interacts with TJP1/ZO-1, TJP2/ZO-2 and TJP3/ZO-3. The phosphorylated form interacts with EPCAM. In terms of processing, phosphorylated.

The protein resides in the cell membrane. It is found in the basolateral cell membrane. Its subcellular location is the cell junction. The protein localises to the tight junction. Functionally, plays a major role in tight junction-specific obliteration of the intercellular space. The polypeptide is Claudin-7 (Cldn7) (Rattus norvegicus (Rat)).